We begin with the raw amino-acid sequence, 298 residues long: uncharacterized protein (298 aa).

Catalysis depends on charge relay system residues threonine 43 and tyrosine 105. Tyrosine 131 functions as the Proton donor in the catalytic mechanism. Lysine 159 serves as the catalytic Schiff-base intermediate with substrate.

The protein belongs to the DapA family. Homotetramer.

The protein resides in the cytoplasm. This is an uncharacterized protein from Pyrococcus furiosus (strain ATCC 43587 / DSM 3638 / JCM 8422 / Vc1).